A 291-amino-acid polypeptide reads, in one-letter code: Lipoyl synthase (291 aa).

Residues Cys-36, Cys-41, Cys-47, Cys-62, Cys-66, Cys-69, and Ser-275 each coordinate [4Fe-4S] cluster. The Radical SAM core domain maps to 48 to 264 (FSKKTATFLI…KEFAISIGFK (217 aa)).

It belongs to the radical SAM superfamily. Lipoyl synthase family. The cofactor is [4Fe-4S] cluster.

The protein resides in the cytoplasm. The enzyme catalyses [[Fe-S] cluster scaffold protein carrying a second [4Fe-4S](2+) cluster] + N(6)-octanoyl-L-lysyl-[protein] + 2 oxidized [2Fe-2S]-[ferredoxin] + 2 S-adenosyl-L-methionine + 4 H(+) = [[Fe-S] cluster scaffold protein] + N(6)-[(R)-dihydrolipoyl]-L-lysyl-[protein] + 4 Fe(3+) + 2 hydrogen sulfide + 2 5'-deoxyadenosine + 2 L-methionine + 2 reduced [2Fe-2S]-[ferredoxin]. The protein operates within protein modification; protein lipoylation via endogenous pathway; protein N(6)-(lipoyl)lysine from octanoyl-[acyl-carrier-protein]: step 2/2. Functionally, catalyzes the radical-mediated insertion of two sulfur atoms into the C-6 and C-8 positions of the octanoyl moiety bound to the lipoyl domains of lipoate-dependent enzymes, thereby converting the octanoylated domains into lipoylated derivatives. The protein is Lipoyl synthase of Caldicellulosiruptor bescii (strain ATCC BAA-1888 / DSM 6725 / KCTC 15123 / Z-1320) (Anaerocellum thermophilum).